Reading from the N-terminus, the 380-residue chain is Protein FAM110B (380 aa).

The tract at residues Ala92–Asp272 is disordered. The segment covering Gly100–Ser110 has biased composition (gly residues). Residues Ile127–Ser138 show a composition bias toward polar residues. Positions Asp153–Phe162 are enriched in basic and acidic residues. Residues Lys239 to Ser248 show a composition bias toward low complexity. Phosphoserine is present on residues Ser248 and Ser311. Residues Asp327–Arg347 form a disordered region. Residues Ser336–Asn345 are compositionally biased toward basic and acidic residues.

It belongs to the FAM110 family.

The protein resides in the cytoplasm. Its subcellular location is the cytoskeleton. The protein localises to the microtubule organizing center. It localises to the centrosome. The polypeptide is Protein FAM110B (FAM110B) (Bos taurus (Bovine)).